A 733-amino-acid chain; its full sequence is Ribosomal protein S6 kinase 2 alpha (733 aa).

Residues 18–38 are disordered; that stretch reads EDPENGHGSPEEGGRHTSKDE. Positions 62-321 constitute a Protein kinase 1 domain; it reads FVLLKVLGQG…AEEIKRQPFF (260 aa). Residues 68 to 76 and lysine 94 each bind ATP; that span reads LGQGSFGKV. Aspartate 187 acts as the Proton acceptor in catalysis. The residue at position 221 (serine 221) is a Phosphoserine. In terms of domain architecture, AGC-kinase C-terminal spans 322–391; the sequence is STIDWNKLFR…VAPALVEEDA (70 aa). Threonine 359 is modified (phosphothreonine). Serine 363 is modified (phosphoserine). Serine 380 carries the phosphoserine; by autocatalysis modification. Residues 416–673 form the Protein kinase 2 domain; it reads YTVRETIGVG…AKQVLQHEWI (258 aa). ATP-binding positions include 422–430 and lysine 445; that span reads IGVGSYSVC. Aspartate 533 serves as the catalytic Proton acceptor. Position 571 is a phosphothreonine (threonine 571). Phosphoserine is present on serine 730.

The protein belongs to the protein kinase superfamily. AGC Ser/Thr protein kinase family. S6 kinase subfamily. Requires Mg(2+) as cofactor. In terms of processing, autophosphorylated on Ser-380, as part of the activation process.

It carries out the reaction L-seryl-[protein] + ATP = O-phospho-L-seryl-[protein] + ADP + H(+). The catalysed reaction is L-threonyl-[protein] + ATP = O-phospho-L-threonyl-[protein] + ADP + H(+). With respect to regulation, activated by multiple phosphorylations on threonine and serine residues. Serine/threonine kinase that may play a role in mediating the growth-factor and stress induced activation of transcription. In Xenopus laevis (African clawed frog), this protein is Ribosomal protein S6 kinase 2 alpha (rps6ka).